The sequence spans 198 residues: Heme oxygenase PigA (198 aa).

Residue His-26 coordinates heme b.

This sequence belongs to the heme oxygenase family.

The catalysed reaction is heme b + 3 AH2 + 3 O2 + 2 H(+) = biliverdin IXbeta + CO + Fe(2+) + 3 A + 3 H2O. It catalyses the reaction heme b + 3 AH2 + 3 O2 + 3 H(+) = biliverdin IXdelta + CO + Fe(2+) + 3 A + 3 H2O. Functionally, involved in heme degradation. Catalyzes the degradation of heme to biliverdin, with the release of iron. Forms biliverdin delta (70%) and beta (30%). Under anaerobic conditions ferredoxin--NADP(+) reductase (fpr) can provide the necessary electrons; Bfd is not required. The polypeptide is Heme oxygenase PigA (Pseudomonas aeruginosa (strain ATCC 15692 / DSM 22644 / CIP 104116 / JCM 14847 / LMG 12228 / 1C / PRS 101 / PAO1)).